The primary structure comprises 464 residues: GTPase Der (464 aa).

EngA-type G domains follow at residues 3-166 (PTIA…AVES) and 177-350 (LKMA…QAAT). GTP is bound by residues 9–16 (GRPNVGKS), 56–60 (DTGGI), 118–121 (NKVD), 183–190 (GRPNVGKS), 230–234 (DTAGV), and 295–298 (NKWD). Residues 351–435 (EKYSTSFLTR…PVRIEYRSGD (85 aa)) enclose the KH-like domain.

Belongs to the TRAFAC class TrmE-Era-EngA-EngB-Septin-like GTPase superfamily. EngA (Der) GTPase family. In terms of assembly, associates with the 50S ribosomal subunit.

Functionally, GTPase that plays an essential role in the late steps of ribosome biogenesis. The sequence is that of GTPase Der from Teredinibacter turnerae (strain ATCC 39867 / T7901).